The chain runs to 214 residues: NADH-quinone oxidoreductase subunit C (214 aa).

Belongs to the complex I 30 kDa subunit family. NDH-1 is composed of 14 different subunits. Subunits NuoB, C, D, E, F, and G constitute the peripheral sector of the complex.

The protein resides in the cell inner membrane. It catalyses the reaction a quinone + NADH + 5 H(+)(in) = a quinol + NAD(+) + 4 H(+)(out). In terms of biological role, NDH-1 shuttles electrons from NADH, via FMN and iron-sulfur (Fe-S) centers, to quinones in the respiratory chain. The immediate electron acceptor for the enzyme in this species is believed to be ubiquinone. Couples the redox reaction to proton translocation (for every two electrons transferred, four hydrogen ions are translocated across the cytoplasmic membrane), and thus conserves the redox energy in a proton gradient. The sequence is that of NADH-quinone oxidoreductase subunit C from Caulobacter sp. (strain K31).